The following is a 191-amino-acid chain: uncharacterized protein (191 aa).

Positions 1–22 are cleaved as a signal peptide; that stretch reads MKSLRLMLCAMPLMLTGCSTMS.

This is an uncharacterized protein from Escherichia coli (strain K12).